A 361-amino-acid chain; its full sequence is 5-formaminoimidazole-4-carboxamide-1-(beta)-D-ribofuranosyl 5'-monophosphate synthetase (361 aa).

Residues histidine 27 and serine 94 each coordinate 5-amino-1-(5-phospho-beta-D-ribosyl)imidazole-4-carboxamide. The region spanning 116 to 348 (RAILRWEAER…MGQRIAKEIK (233 aa)) is the ATP-grasp domain. ATP contacts are provided by residues 146–208 (PDEI…ANYC) and glutamate 230. Position 258 (asparagine 258) interacts with 5-amino-1-(5-phospho-beta-D-ribosyl)imidazole-4-carboxamide. Mg(2+) contacts are provided by glutamine 297 and glutamate 310.

This sequence belongs to the phosphohexose mutase family. It depends on Mg(2+) as a cofactor. Requires Mn(2+) as cofactor.

The enzyme catalyses 5-amino-1-(5-phospho-beta-D-ribosyl)imidazole-4-carboxamide + formate + ATP = 5-formamido-1-(5-phospho-D-ribosyl)imidazole-4-carboxamide + ADP + phosphate. Its pathway is purine metabolism; IMP biosynthesis via de novo pathway; 5-formamido-1-(5-phospho-D-ribosyl)imidazole-4-carboxamide from 5-amino-1-(5-phospho-D-ribosyl)imidazole-4-carboxamide (formate route): step 1/1. Functionally, catalyzes the ATP- and formate-dependent formylation of 5-aminoimidazole-4-carboxamide-1-beta-d-ribofuranosyl 5'-monophosphate (AICAR) to 5-formaminoimidazole-4-carboxamide-1-beta-d-ribofuranosyl 5'-monophosphate (FAICAR) in the absence of folates. The chain is 5-formaminoimidazole-4-carboxamide-1-(beta)-D-ribofuranosyl 5'-monophosphate synthetase from Methanococcus vannielii (strain ATCC 35089 / DSM 1224 / JCM 13029 / OCM 148 / SB).